The following is a 259-amino-acid chain: Taurine import ATP-binding protein TauB (259 aa).

The region spanning 4 to 233 (LELERISAQY…RYAAGESARA (230 aa)) is the ABC transporter domain. 38–45 (GPSGSGKT) is a binding site for ATP.

This sequence belongs to the ABC transporter superfamily. Taurine importer (TC 3.A.1.17.1) family. The complex is composed of two ATP-binding proteins (TauB), two transmembrane proteins (TauC) and a solute-binding protein (TauA).

The protein resides in the cell inner membrane. It carries out the reaction taurine(out) + ATP + H2O = taurine(in) + ADP + phosphate + H(+). Part of the ABC transporter complex TauABC involved in taurine import. Responsible for energy coupling to the transport system. The polypeptide is Taurine import ATP-binding protein TauB (Pseudomonas entomophila (strain L48)).